A 309-amino-acid polypeptide reads, in one-letter code: Mitochondrial glycine transporter (309 aa).

3 Solcar repeats span residues serine 2–leucine 94, leucine 124–glutamate 207, and glutamine 219–leucine 304. The next 6 membrane-spanning stretches (helical) occupy residues leucine 8 to glutamine 33, glycine 69 to methionine 95, leucine 130 to glutamate 155, glycine 182 to lysine 205, isoleucine 223 to isoleucine 249, and glycine 279 to valine 297.

This sequence belongs to the mitochondrial carrier (TC 2.A.29) family. SLC25A38 subfamily.

It localises to the mitochondrion inner membrane. The enzyme catalyses glycine(in) = glycine(out). Mitochondrial glycine transporter that imports glycine into the mitochondrial matrix. Plays an important role in providing glycine for the first enzymatic step in heme biosynthesis, the condensation of glycine with succinyl-CoA to produce 5-aminolevulinate (ALA) in the mitochondrial matrix. The protein is Mitochondrial glycine transporter of Laccaria bicolor (strain S238N-H82 / ATCC MYA-4686) (Bicoloured deceiver).